Reading from the N-terminus, the 140-residue chain is Auxin-responsive protein IAA26 (140 aa).

Residues 1–40 (MASYGDDGVELTELTLGPPGASARRARRGRKNGHPPPSSS) are disordered. Positions 14 to 18 (LTLGP) match the EAR-like (transcriptional repression) motif. The span at 24-33 (RRARRGRKNG) shows a compositional bias: basic residues. Positions 45 to 130 (AYFVKVSMDG…SCKRMRVMRA (86 aa)) constitute a PB1 domain.

The protein belongs to the Aux/IAA family. In terms of assembly, homodimers and heterodimers. Expressed in roots, seedlings and flowers.

Its subcellular location is the nucleus. Functionally, aux/IAA proteins are short-lived transcriptional factors that function as repressors of early auxin response genes at low auxin concentrations. The polypeptide is Auxin-responsive protein IAA26 (IAA26) (Oryza sativa subsp. japonica (Rice)).